A 96-amino-acid chain; its full sequence is Large ribosomal subunit protein bL27 (96 aa).

The segment at 12-33 (HKGGGSSANGRNSAGRRLGAKA) is disordered. Low complexity predominate over residues 19 to 28 (ANGRNSAGRR).

Belongs to the bacterial ribosomal protein bL27 family.

In Lactobacillus helveticus (strain DPC 4571), this protein is Large ribosomal subunit protein bL27.